A 142-amino-acid chain; its full sequence is PDZ domain-containing protein 11 (142 aa).

One can recognise a PDZ domain in the interval 49–131; the sequence is TIVLKKPPGA…ILMKVRYFPY (83 aa).

It localises to the cytoplasm. This Danio rerio (Zebrafish) protein is PDZ domain-containing protein 11 (pdzd11).